The following is a 437-amino-acid chain: MSKYNVLIVGSGGREHALAWKVKQSQHVQNVFVAPGNAGTGMDATNVDLDPADHDAVIQFAKENNVGLVIVGPEAPLVAGLVDALTDAGLRAFGPSKAASELEGSKVFCKNLLRSADIPTADYRTFRSADDASRYIKDRFSEPTDPVNVVVKADGLAAGKGVVVCDTRSEALEAIDRIAARKEFGAAGKELIIEERLTGPEVSVLAITDGETIVTLPPAQDHKPANDGDTGPNTGGMGAYCPAPVLDEETLAKVESSILVPVVHAMKRSRRPFKGVLYAGLMLTPAGPKVLEFNVRFGDPECQPLLMRLKTDLVEVMQAVVDGKLEETGPLEFDPRPAICVVMASEGYPADYEKGHAITGIESADKMENVKVFHAGTQRVDGEVVNTGGRVLGVTAMGDSISAAKLQAYKAVREIRWQGAWCRKDISDKALVTADKA.

The ATP-grasp domain maps to K110–D322. E142–S203 provides a ligand contact to ATP. Mg(2+)-binding residues include E292 and N294.

This sequence belongs to the GARS family. Requires Mg(2+) as cofactor. Mn(2+) serves as cofactor.

The catalysed reaction is 5-phospho-beta-D-ribosylamine + glycine + ATP = N(1)-(5-phospho-beta-D-ribosyl)glycinamide + ADP + phosphate + H(+). It functions in the pathway purine metabolism; IMP biosynthesis via de novo pathway; N(1)-(5-phospho-D-ribosyl)glycinamide from 5-phospho-alpha-D-ribose 1-diphosphate: step 2/2. The sequence is that of Phosphoribosylamine--glycine ligase from Rhodopirellula baltica (strain DSM 10527 / NCIMB 13988 / SH1).